The following is a 307-amino-acid chain: tRNA pseudouridine synthase B (307 aa).

Asp39 (nucleophile) is an active-site residue.

This sequence belongs to the pseudouridine synthase TruB family. Type 1 subfamily.

It catalyses the reaction uridine(55) in tRNA = pseudouridine(55) in tRNA. Functionally, responsible for synthesis of pseudouridine from uracil-55 in the psi GC loop of transfer RNAs. The chain is tRNA pseudouridine synthase B from Lactiplantibacillus plantarum (strain ATCC BAA-793 / NCIMB 8826 / WCFS1) (Lactobacillus plantarum).